The chain runs to 257 residues: Snake venom serine protease KN11 (257 aa).

An N-terminal signal peptide occupies residues 1–18 (MVLIRVLANLLILQLSYA). Residues 19-24 (QKSSEL) constitute a propeptide that is removed on maturation. Residues 25 to 248 (VTGGHPCNIN…HLDWIKSIIA (224 aa)) form the Peptidase S1 domain. 6 disulfides stabilise this stretch: C31–C162, C49–C65, C97–C255, C141–C209, C173–C188, and C199–C224. Active-site charge relay system residues include H64 and D109. 2 N-linked (GlcNAc...) asparagine glycosylation sites follow: N120 and N121. S203 (charge relay system) is an active-site residue.

Belongs to the peptidase S1 family. Snake venom subfamily. Monomer. Expressed by the venom gland.

It localises to the secreted. Snake venom serine protease that may act in the hemostasis system of the prey. The protein is Snake venom serine protease KN11 of Trimeresurus stejnegeri (Chinese green tree viper).